The sequence spans 462 residues: A-type ATP synthase subunit B (462 aa).

The protein belongs to the ATPase alpha/beta chains family. In terms of assembly, has multiple subunits with at least A(3), B(3), C, D, E, F, H, I and proteolipid K(x).

The protein localises to the cell membrane. In terms of biological role, component of the A-type ATP synthase that produces ATP from ADP in the presence of a proton gradient across the membrane. The B chain is a regulatory subunit. The protein is A-type ATP synthase subunit B of Pyrococcus abyssi (strain GE5 / Orsay).